We begin with the raw amino-acid sequence, 445 residues long: Chromosomal replication initiator protein DnaA (445 aa).

The tract at residues 1–73 is domain I, interacts with DnaA modulators; it reads MSTHLTETWE…VNALKLLTSK (73 aa). The domain II stretch occupies residues 73–106; it reads KKYNIDFIVTTEEKIEKNHNNEKSNIVVNDEMST. The segment at 107-323 is domain III, AAA+ region; that stretch reads MLNPKYTFDS…GALIRIVAFS (217 aa). Residues Gly-151, Gly-153, Lys-154, and Thr-155 each coordinate ATP. The domain IV, binds dsDNA stretch occupies residues 324–445; the sequence is SLTNKEISVD…KELNKRINQK (122 aa).

The protein belongs to the DnaA family. In terms of assembly, oligomerizes as a right-handed, spiral filament on DNA at oriC.

The protein localises to the cytoplasm. Its function is as follows. Plays an essential role in the initiation and regulation of chromosomal replication. ATP-DnaA binds to the origin of replication (oriC) to initiate formation of the DNA replication initiation complex once per cell cycle. Binds the DnaA box (a 9 base pair repeat at the origin) and separates the double-stranded (ds)DNA. Forms a right-handed helical filament on oriC DNA; dsDNA binds to the exterior of the filament while single-stranded (ss)DNA is stabiized in the filament's interior. The ATP-DnaA-oriC complex binds and stabilizes one strand of the AT-rich DNA unwinding element (DUE), permitting loading of DNA polymerase. After initiation quickly degrades to an ADP-DnaA complex that is not apt for DNA replication. Binds acidic phospholipids. This chain is Chromosomal replication initiator protein DnaA, found in Clostridium botulinum (strain Okra / Type B1).